Reading from the N-terminus, the 90-residue chain is UPF0298 protein SSU98_1559 (90 aa).

It belongs to the UPF0298 family.

It localises to the cytoplasm. The chain is UPF0298 protein SSU98_1559 from Streptococcus suis (strain 98HAH33).